A 398-amino-acid chain; its full sequence is 1-deoxy-D-xylulose 5-phosphate reductoisomerase (398 aa).

Residues threonine 10, glycine 11, serine 12, isoleucine 13, asparagine 38, and asparagine 124 each contribute to the NADPH site. Lysine 125 provides a ligand contact to 1-deoxy-D-xylulose 5-phosphate. Glutamate 126 contacts NADPH. Aspartate 150 provides a ligand contact to Mn(2+). 1-deoxy-D-xylulose 5-phosphate contacts are provided by serine 151, glutamate 152, serine 176, and histidine 199. Mn(2+) is bound at residue glutamate 152. Glycine 205 is an NADPH binding site. 1-deoxy-D-xylulose 5-phosphate contacts are provided by serine 212, asparagine 217, lysine 218, and glutamate 221. Glutamate 221 is a binding site for Mn(2+).

This sequence belongs to the DXR family. The cofactor is Mg(2+). Mn(2+) serves as cofactor.

The enzyme catalyses 2-C-methyl-D-erythritol 4-phosphate + NADP(+) = 1-deoxy-D-xylulose 5-phosphate + NADPH + H(+). The protein operates within isoprenoid biosynthesis; isopentenyl diphosphate biosynthesis via DXP pathway; isopentenyl diphosphate from 1-deoxy-D-xylulose 5-phosphate: step 1/6. Catalyzes the NADPH-dependent rearrangement and reduction of 1-deoxy-D-xylulose-5-phosphate (DXP) to 2-C-methyl-D-erythritol 4-phosphate (MEP). This is 1-deoxy-D-xylulose 5-phosphate reductoisomerase from Crocosphaera subtropica (strain ATCC 51142 / BH68) (Cyanothece sp. (strain ATCC 51142)).